The primary structure comprises 537 residues: Protein swallow (537 aa).

The interval 344–406 is disordered; it reads QPNAGKPKKN…SESSHPSSND (63 aa). 2 stretches are compositionally biased toward low complexity: residues 371 to 383 and 392 to 406; these read NGNGTTSTGHSSS and AAPNNSESSHPSSND.

As to quaternary structure, may be constituted of a homo- or heterodimer.

The protein resides in the nucleus. Functionally, has a role in localizing bicoid mRNA at the anterior margin of the oocyte during oogenesis, and a poorly characterized role in nuclear divisions in early embryogenesis. This chain is Protein swallow (swa), found in Drosophila pseudoobscura pseudoobscura (Fruit fly).